The primary structure comprises 255 residues: 5-oxoprolinase subunit A (255 aa).

The protein belongs to the LamB/PxpA family. In terms of assembly, forms a complex composed of PxpA, PxpB and PxpC.

It catalyses the reaction 5-oxo-L-proline + ATP + 2 H2O = L-glutamate + ADP + phosphate + H(+). Its function is as follows. Catalyzes the cleavage of 5-oxoproline to form L-glutamate coupled to the hydrolysis of ATP to ADP and inorganic phosphate. This Thermococcus sibiricus (strain DSM 12597 / MM 739) protein is 5-oxoprolinase subunit A.